The chain runs to 303 residues: D-alanine--D-alanine ligase (303 aa).

The ATP-grasp domain occupies 100–295 (KQLLRRHGIL…FPALIARLIE (196 aa)). 127–180 (GLGYPLFVKPNTGGSSLCLSRVTQPEGLAPALEAVFAHCGEAIVEPAIPGVEVT) is an ATP binding site. 3 residues coordinate Mg(2+): Asp249, Glu262, and Asn264.

This sequence belongs to the D-alanine--D-alanine ligase family. Mg(2+) is required as a cofactor. The cofactor is Mn(2+).

It is found in the cytoplasm. It carries out the reaction 2 D-alanine + ATP = D-alanyl-D-alanine + ADP + phosphate + H(+). It functions in the pathway cell wall biogenesis; peptidoglycan biosynthesis. Functionally, cell wall formation. The sequence is that of D-alanine--D-alanine ligase from Nitratidesulfovibrio vulgaris (strain ATCC 29579 / DSM 644 / CCUG 34227 / NCIMB 8303 / VKM B-1760 / Hildenborough) (Desulfovibrio vulgaris).